A 606-amino-acid chain; its full sequence is V-type proton ATPase catalytic subunit A (606 aa).

239-246 provides a ligand contact to ATP; that stretch reads GAFGCGKT.

It belongs to the ATPase alpha/beta chains family. In terms of assembly, V-ATPase is a heteromultimeric enzyme made up of two complexes: the ATP-hydrolytic V1 complex and the proton translocation V0 complex. The V1 complex consists of three catalytic AB heterodimers that form a heterohexamer, three peripheral stalks each consisting of EG heterodimers, one central rotor including subunits D and F, and the regulatory subunits C and H. The proton translocation complex V0 consists of the proton transport subunit a, a ring of proteolipid subunits c9c'', rotary subunit d, subunits e and f, and the accessory subunits vah-19/Ac45 and vah-20/PRR.

The enzyme catalyses ATP + H2O + 4 H(+)(in) = ADP + phosphate + 5 H(+)(out). Functionally, catalytic subunit of the V1 complex of vacuolar(H+)-ATPase (V-ATPase), a multisubunit enzyme composed of a peripheral complex (V1) that hydrolyzes ATP and a membrane integral complex (V0) that translocates protons. V-ATPase is responsible for acidifying and maintaining the pH of intracellular compartments and in some cell types, is targeted to the plasma membrane, where it is responsible for acidifying the extracellular environment. Required along with other vacuolar ATPase components for the removal of protein aggregates which form in immature oocytes in the distal gonad. This removal occurs as the oocytes mature and move to the proximal gonad, is triggered by the introduction of sperm through mating and occurs before fertilization. The introduction of sperm triggers V-ATPase accumulation in proximal oocytes and induces lysosomal acidification which leads to engulfing of protein aggregates by lysosomes and subsequent clearance of the aggregates. Lysosomal acidification also leads to changes in mitochondrial morphology and function. Mitochondria in distal immature oocytes are fragmented, produce high levels of reactive oxygen species (ROS) and have high membrane potential, indicative of metabolic inactivity. In contrast, mitochondria in proximal mature oocytes are tubular with lower ROS levels and membrane potential, indicative of an active metabolic state required for aggregate mobilization before clearance. Involved in receptor-mediated endocytosis. In Caenorhabditis briggsae, this protein is V-type proton ATPase catalytic subunit A.